The sequence spans 316 residues: D-alanine--D-alanine ligase (316 aa).

The ATP-grasp domain maps to 104–303 (KRVWLQHGLP…YADLCVAILA (200 aa)). 130-185 (PDRLGLPLILKPPHEGSTVGITKVAGYSDMKAAYELAARFDAEVLAEQFITGRELT) contributes to the ATP binding site. Mg(2+)-binding residues include Asp257, Glu270, and Asn272.

The protein belongs to the D-alanine--D-alanine ligase family. Mg(2+) is required as a cofactor. It depends on Mn(2+) as a cofactor.

The protein resides in the cytoplasm. It carries out the reaction 2 D-alanine + ATP = D-alanyl-D-alanine + ADP + phosphate + H(+). Its pathway is cell wall biogenesis; peptidoglycan biosynthesis. Its function is as follows. Cell wall formation. In Bordetella parapertussis (strain 12822 / ATCC BAA-587 / NCTC 13253), this protein is D-alanine--D-alanine ligase.